We begin with the raw amino-acid sequence, 111 residues long: Nucleoid-associated protein NMCC_1355 (111 aa).

The protein belongs to the YbaB/EbfC family. In terms of assembly, homodimer.

The protein resides in the cytoplasm. Its subcellular location is the nucleoid. Functionally, binds to DNA and alters its conformation. May be involved in regulation of gene expression, nucleoid organization and DNA protection. This Neisseria meningitidis serogroup C (strain 053442) protein is Nucleoid-associated protein NMCC_1355.